We begin with the raw amino-acid sequence, 155 residues long: SsrA-binding protein (155 aa).

It belongs to the SmpB family.

It localises to the cytoplasm. In terms of biological role, required for rescue of stalled ribosomes mediated by trans-translation. Binds to transfer-messenger RNA (tmRNA), required for stable association of tmRNA with ribosomes. tmRNA and SmpB together mimic tRNA shape, replacing the anticodon stem-loop with SmpB. tmRNA is encoded by the ssrA gene; the 2 termini fold to resemble tRNA(Ala) and it encodes a 'tag peptide', a short internal open reading frame. During trans-translation Ala-aminoacylated tmRNA acts like a tRNA, entering the A-site of stalled ribosomes, displacing the stalled mRNA. The ribosome then switches to translate the ORF on the tmRNA; the nascent peptide is terminated with the 'tag peptide' encoded by the tmRNA and targeted for degradation. The ribosome is freed to recommence translation, which seems to be the essential function of trans-translation. The sequence is that of SsrA-binding protein from Helicobacter hepaticus (strain ATCC 51449 / 3B1).